We begin with the raw amino-acid sequence, 138 residues long: Small ribosomal subunit protein uS11c (138 aa).

A disordered region spans residues 1-24 (MAKAIPRSGSRRSGRIGSRKSTRR). Basic residues predominate over residues 9-24 (GSRRSGRIGSRKSTRR).

Belongs to the universal ribosomal protein uS11 family. As to quaternary structure, part of the 30S ribosomal subunit.

It localises to the plastid. Its subcellular location is the chloroplast. This is Small ribosomal subunit protein uS11c from Panax ginseng (Korean ginseng).